A 449-amino-acid chain; its full sequence is Ktr system potassium uptake protein D (449 aa).

10 helical membrane-spanning segments follow: residues Leu-17 to Ala-37, Thr-46 to Val-66, Ile-75 to Gly-95, Val-133 to Leu-153, Phe-194 to Val-214, Ile-235 to Glu-255, Leu-297 to Ile-317, Leu-355 to Thr-375, Leu-380 to Ile-400, and Val-411 to Gly-431.

The protein belongs to the TrkH potassium transport family. Ktr (TC 2.A.38.4) subfamily. In terms of assembly, homodimer. Part of the KtrCD complex formed by an octameric catalytic ring of KtrC and a membrane associated dimer of KtrD forming a potassium channel.

Its subcellular location is the cell membrane. Integral membrane subunit of the KtrCD potassium uptake transporter. The 2 major potassium transporter complexes KtrAB and KtrCD confer resistance to both suddenly imposed and prolonged osmotic stress. The polypeptide is Ktr system potassium uptake protein D (ktrD) (Bacillus subtilis (strain 168)).